We begin with the raw amino-acid sequence, 110 residues long: Neural hemoglobin (110 aa).

One can recognise a Globin domain in the interval 2–110; that stretch reads VNWAAVVDDF…HAIDDILSHL (109 aa). His-70 lines the heme pocket.

It belongs to the globin family. Homotetramer. Self-associates in the deoxy state. Seems to dissociate upon oxygenation.

Functionally, acts as an oxygen store capable of sustaining neuronal activity in an anoxic environment for 5 to 30 minutes. The sequence is that of Neural hemoglobin from Cerebratulus lacteus (Milky ribbon worm).